The following is a 69-amino-acid chain: Protein transport protein Sec61 subunit gamma (69 aa).

At 1–40 the chain is on the cytoplasmic side; it reads MDILEETAAPLKDFAKNSIRLFKKCTKPDAQEFQKIALAT. The helical transmembrane segment at 41 to 61 threads the bilayer; that stretch reads LIGFAIMGFIGFFVKLIHIPI. Topologically, residues 62–69 are extracellular; that stretch reads NNILVGGV.

This sequence belongs to the SecE/SEC61-gamma family. In terms of assembly, heterotrimeric complex composed of SEC61-alpha, SEC61-beta and SEC61-gamma.

It localises to the endoplasmic reticulum membrane. Functionally, necessary for protein translocation in the endoplasmic reticulum. This chain is Protein transport protein Sec61 subunit gamma (sec61g), found in Dictyostelium discoideum (Social amoeba).